The sequence spans 445 residues: Chromosome partition protein MukF (445 aa).

The interval 213 to 241 is leucine-zipper; the sequence is LSETSATLKELQDTLQAAGDELQTQILDI.

Belongs to the MukF family. As to quaternary structure, interacts, and probably forms a ternary complex, with MukE and MukB via its C-terminal region. The complex formation is stimulated by calcium or magnesium. It is required for an interaction between MukE and MukB.

The protein resides in the cytoplasm. It is found in the nucleoid. Its function is as follows. Involved in chromosome condensation, segregation and cell cycle progression. May participate in facilitating chromosome segregation by condensation DNA from both sides of a centrally located replisome during cell division. Not required for mini-F plasmid partitioning. Probably acts via its interaction with MukB and MukE. Overexpression results in anucleate cells. It has a calcium binding activity. In Vibrio atlanticus (strain LGP32) (Vibrio splendidus (strain Mel32)), this protein is Chromosome partition protein MukF.